A 467-amino-acid chain; its full sequence is Transcription factor TGAL7 (467 aa).

Residues 1 to 10 show a composition bias toward basic and acidic residues; that stretch reads MGGSREEDRQ. Disordered regions lie at residues 1-42 and 105-184; these read MGGS…KESS and QLQV…KTLR. The segment covering 25-41 has biased composition (low complexity); sequence SSSPTTMIASSSMSKES. Residues 120-129 show a composition bias toward polar residues; the sequence is QGGQKINSSV. Residues 145-157 are compositionally biased toward basic and acidic residues; that stretch reads KDNKNSSLIKKEG. Residues 158–168 show a composition bias toward polar residues; it reads SSSGKGATTSN. The segment covering 169-182 has biased composition (basic and acidic residues); sequence DPEREGRRTLDPKT. In terms of domain architecture, bZIP spans 179–223; sequence DPKTLRRLAQNREAARKSRLRKKAYIQQLESSRIRLSQLEQQVHV. The basic motif stretch occupies residues 181 to 201; it reads KTLRRLAQNREAARKSRLRKK. Positions 207–221 are leucine-zipper; sequence LESSRIRLSQLEQQV. One can recognise a DOG1 domain in the interval 247–458; it reads ASLFDLEYGR…RALSTLWVAR (212 aa).

This sequence belongs to the bZIP family. In terms of assembly, interacts with NPR5/NH4, NH5.1 and NH5.2.

The protein resides in the nucleus. Transcriptional regulator involved in defense response. In Oryza sativa subsp. japonica (Rice), this protein is Transcription factor TGAL7.